A 309-amino-acid polypeptide reads, in one-letter code: Mannitol-1-phosphatase (309 aa).

H82 (tele-phosphohistidine intermediate) is an active-site residue. E166 serves as the catalytic Proton donor/acceptor.

This sequence belongs to the phosphoglycerate mutase family.

The catalysed reaction is D-mannitol 1-phosphate + H2O = D-mannitol + phosphate. Its activity is regulated as follows. By diethyl pyrocarbonate (DEPC). In terms of biological role, key enzyme for mannitol biosynthesis. The sequence is that of Mannitol-1-phosphatase from Eimeria tenella (Coccidian parasite).